The following is a 191-amino-acid chain: Signal peptidase complex catalytic subunit sec11 (191 aa).

Residues 1–14 (MLSFLSSNISNARQ) are Cytoplasmic-facing. Residues 15–33 (TLAQVLNFALVLSSAFMMW) form a helical; Signal-anchor for type II membrane protein membrane-spanning segment. The Lumenal portion of the chain corresponds to 34-191 (KGLSVFTGSS…MGVMVMLQRE (158 aa)). Catalysis depends on charge relay system residues Ser-53, His-92, and Asp-133. Residues 177 to 188 (VLLGIMGVMVML) form a C-terminal short (CTS) helix region.

This sequence belongs to the peptidase S26B family. As to quaternary structure, component of the signal peptidase complex (SPC) composed of a catalytic subunit SEC11 and three accessory subunits SPC1, SPC2 and SPC3. The complex induces a local thinning of the ER membrane which is used to measure the length of the signal peptide (SP) h-region of protein substrates. This ensures the selectivity of the complex towards h-regions shorter than 18-20 amino acids. SPC associates with the translocon complex.

The protein localises to the endoplasmic reticulum membrane. The catalysed reaction is Cleavage of hydrophobic, N-terminal signal or leader sequences from secreted and periplasmic proteins.. In terms of biological role, catalytic component of the signal peptidase complex (SPC) which catalyzes the cleavage of N-terminal signal sequences from nascent proteins as they are translocated into the lumen of the endoplasmic reticulum. Specifically cleaves N-terminal signal peptides that contain a hydrophobic alpha-helix (h-region) shorter than 18-20 amino acids. The sequence is that of Signal peptidase complex catalytic subunit sec11 (sec11) from Aspergillus terreus (strain NIH 2624 / FGSC A1156).